A 138-amino-acid polypeptide reads, in one-letter code: Basic phospholipase A2 ammodytoxin B (138 aa).

Residues 1–16 (MRTLWIVAVCLIGVEG) form the signal peptide. 7 cysteine pairs are disulfide-bonded: cysteine 42-cysteine 131, cysteine 44-cysteine 60, cysteine 59-cysteine 111, cysteine 65-cysteine 138, cysteine 66-cysteine 104, cysteine 73-cysteine 97, and cysteine 91-cysteine 102. The Ca(2+) site is built by tyrosine 43, glycine 45, and glycine 47. Residue histidine 63 is part of the active site. A Ca(2+)-binding site is contributed by aspartate 64. Residue aspartate 105 is part of the active site.

It belongs to the phospholipase A2 family. Group II subfamily. D49 sub-subfamily. As to quaternary structure, monomer. Binds to calmodulin, coagulation factor X (F10), M-type PLA2 receptor (R-180), 14-3-3 proteins gamma (YWHAG) and epsilon (YWHAE), and R25, a mitochondrial membrane protein. Ca(2+) is required as a cofactor. As to expression, expressed by the venom gland.

The protein resides in the secreted. It localises to the host cytoplasm. It is found in the host cytosol. It carries out the reaction a 1,2-diacyl-sn-glycero-3-phosphocholine + H2O = a 1-acyl-sn-glycero-3-phosphocholine + a fatty acid + H(+). Snake venom phospholipase A2 (PLA2) that acts as a presynaptic neurotoxin, an inhibitor of blood coagulation, and has been found to bind with high affinity to intracellular proteins. The response of indirectly stimulated neuromuscular preparations to ammodytoxin (Atx) is triphasic. The first phase, the transient inhibition of the acetylcholine (ACh) release, starts soon after the addition of Atx and lasts for several minutes. This phase is probably independent of Atx enzymatic activity. The effect may be due to the specific binding of the toxin to presynaptic receptors. These receptors, called N-type receptors, are still unidentified. It is noteworthy that a neuronal isoform of the M-type PLA2 receptor (R180) has been identified as a high-affinity receptor for Atx in neuronal plasma membranes. It was demonstrated however that this receptor is not essential for expression of neurotoxicity by Atx. The second phase corresponds to an augmentation of neurotransmitter release. A peak is reached 10-20 minutes after exposure of the preparation to Atx and is followed by a gradual reduction. In this phase, the enzymatic activity of Atx of the mammalian is not significant. It is speculated that the increased release of neurotransmitter in this phase is induced by the interference of Atx with voltage-gated potassium channels. Measurements of ionic currents showed however that voltage-gated potassium channels are not affected by Atx. The third phase of the response of neuromuscular preparations to Atx, which corresponds to a complete and irreversible paralysis, is clearly dependent on the hydrolytic activity of the toxin. In addition to its presynaptic neurotoxicity, Atx shows an anticoagulant activity by binding with high affinity to activated coagulation factor X (F10) thus inhibiting the formation of the prothrombinase complex (FX/FV) and its activity (IC(50) is 82 nM). Surprisingly, Atx was discovered to bind intracellular proteins such as calmodulin (CaM), 14-3-3 proteins gamma (YWHAG) and epsilon (YWHAE) (by similarity with AtxC), as well as R25 (by similarity with AtxC), a mitochondrial integral membrane protein found in cerebral cortex. These findings raised a doubt about the dogma of the exclusively extracellular action of PLA2s, defended by the potential instability of these molecules in the reducing environment of the eukaryotic cytosol coupled with their possible inability to act as enzymes in this cellular compartment, due to too low concentration of calcium ions. This hypothesis was challenged efficiently by demonstrating the internalization of AtxA into a culture cells, but still remains to be directly demonstrated in vivo. PLA2 catalyzes the calcium-dependent hydrolysis of the 2-acyl groups in 3-sn-phosphoglycerides. In Vipera ammodytes ammodytes (Western sand viper), this protein is Basic phospholipase A2 ammodytoxin B.